The primary structure comprises 526 residues: Peptide chain release factor 3 (526 aa).

The tr-type G domain maps to 9–277; that stretch reads DKRRTFAIIS…GIVEWAPKPQ (269 aa). GTP contacts are provided by residues 18-25, 86-90, and 140-143; these read SHPDAGKT, DTPGH, and NKLD.

The protein belongs to the TRAFAC class translation factor GTPase superfamily. Classic translation factor GTPase family. PrfC subfamily.

It is found in the cytoplasm. Increases the formation of ribosomal termination complexes and stimulates activities of RF-1 and RF-2. It binds guanine nucleotides and has strong preference for UGA stop codons. It may interact directly with the ribosome. The stimulation of RF-1 and RF-2 is significantly reduced by GTP and GDP, but not by GMP. In Shewanella woodyi (strain ATCC 51908 / MS32), this protein is Peptide chain release factor 3.